A 454-amino-acid polypeptide reads, in one-letter code: Putative tyrosine kinase 36 (454 aa).

Residues 80–88 (LGSGSFGKV) and K98 contribute to the ATP site. Catalysis depends on D192, which acts as the Proton acceptor.

Belongs to the protein kinase superfamily. Tyr protein kinase family.

The enzyme catalyses L-tyrosyl-[protein] + ATP = O-phospho-L-tyrosyl-[protein] + ADP + H(+). The sequence is that of Putative tyrosine kinase 36 (36) from Alcelaphine herpesvirus 1 (strain C500) (AlHV-1).